Here is a 203-residue protein sequence, read N- to C-terminus: Cytochrome c biogenesis CcmF N-terminal-like mitochondrial protein 2 (203 aa).

The next 2 membrane-spanning stretches (helical) occupy residues 44 to 64 (IWIL…SWWA) and 143 to 163 (IFLW…FYQM).

The protein belongs to the CcmF/CycK/Ccl1/NrfE/CcsA family. Interacts with CCMFC, CCMFN1, CCMH and CYTC-1.

It localises to the mitochondrion inner membrane. Functionally, forms a complex with CCMFC, CCMFN1 and CCMH that performs the assembly of heme with c-type apocytochromes in mitochondria. The protein is Cytochrome c biogenesis CcmF N-terminal-like mitochondrial protein 2 of Arabidopsis thaliana (Mouse-ear cress).